The chain runs to 396 residues: 3-hydroxykynurenine transaminase (396 aa).

The segment at 43 to 44 is binds to and confers specificity for 3-hydroxykynurenine; shared with dimeric partner; that stretch reads SN. Residues 77-79, Ser-154, and Gln-204 contribute to the pyridoxal 5'-phosphate site; that span reads SAH. Residue Ser-154 coordinates substrate. An N6-(pyridoxal phosphate)lysine modification is found at Lys-205. Pyridoxal 5'-phosphate-binding residues include Tyr-256 and Thr-259. Substrate is bound at residue Arg-356.

This sequence belongs to the class-V pyridoxal-phosphate-dependent aminotransferase family. Homodimer. It depends on pyridoxal 5'-phosphate as a cofactor. Expressed in gut and ovaries.

It is found in the peroxisome. It catalyses the reaction L-kynurenine + glyoxylate = kynurenate + glycine + H2O. It carries out the reaction 3-hydroxy-L-kynurenine + glyoxylate = xanthurenate + glycine + H2O. The enzyme catalyses 3-hydroxy-L-kynurenine + pyruvate = xanthurenate + L-alanine + H2O. The catalysed reaction is glyoxylate + L-alanine = glycine + pyruvate. It functions in the pathway amino-acid degradation; L-kynurenine degradation; kynurenate from L-kynurenine: step 1/2. Functionally, catalyzes the pyridoxal 5'-phosphate-dependent transamination of both 3-hydroxykynurenine and L-kynurenine to xanthurenic acid and kynurenic acid, respectively, preferentially using the alpha-ketoacid glyoxylate as the amino group acceptor. Although glyoxylate is the preferred amino group acceptor, transamination of 3-hydroxykynurenine also works with pyruvate as the amino acceptor in vitro. Involved in the detoxification of cytotoxic metabolite 3-hydroxykynurenine generated by the hydroxylation of L-kynurenine, an intermediate in the tryptophan catabolism pathway. The Plasmodium parasite uses xanthurenic acid produced in the midgut to activate its gametocytes ingested during a blood meal. Also catalyzes, although with a lesser efficiency, the transamination of alanine with glyoxylate as an amino group acceptor. May play a role in the detoxification of glyoxylate, a toxic plant metabolite from the diet. The polypeptide is 3-hydroxykynurenine transaminase (Anopheles gambiae (African malaria mosquito)).